A 1063-amino-acid chain; its full sequence is MALQVELIPTGEIIRVVHPHRPCKLALGSDGVRVTMESALTARDRVGVQDFVLLENFTSEAAFIENLRRRFRENLIYTYIGPVLVSVNPYRDLQIYSRQHMERYRGVSFYEVPPHLFAVADTVYRALRTERRDQAVMISGESGAGKTEATKRLLQFYAETCPAPERGGAVRDRLLQSNPVLEAFGNAKTLRNDNSSRFGKYMDVQFDFKGAPVGGHILSYLLEKSRVVHQNHGERNFHIFYQLLEGGEEETLRRLGLERNPQSYLYLVKGQCAKVSSINDKSDWKVVRKALTVIDFTEDEVEDLLSIVASVLHLGNTHFAADEESNAQVTTENQLKYLTRLLGVEGSTLREALTHRKIIAKGEELLSPLNLEQAAYARDALAKAVYSRTFTWLVAKINRSLASKDAESPSWRSTTVLGLLDIYGFEVFQHNSFEQFCINYCNEKLQQLFIELTLKSEQEEYEAEGIAWEPVQYFNNKIICDLVEEKFKGIISILDEECLRPGEATDLTFLEKLEDTIKQHPHFLTHKLADQRTRKSLDRGEFRLLHYAGEVTYNVTGFLDKNNDLLFRNLKETMCSSENPILGQCFDRSELSDKKRPETVATQFKMSLLELVEILKSKEPAYVRCIKPNDSKQPGRFDEVLIRHQVKYLGLMENLRVRRAGFAYRRKYEAFLQRYKSLCPETWPTWTGRPQDGVTVLVRHLGYKPEEYKMGRTKIFIRFPKTLFATEDALEIRRQSLATKIQATWRGFHCRQKFLRVKRSAICIQSWWRGTLGRRKAAKRKWAAQTIRRLIQGFILRHAPRCPENAFFVDHVRTSFLLNLRRQLPRNILDTSWPTPPPALREASELLRELCRKNMVWKYCRSISPEWKQQLQQKAVASEIFKGKKDNYPQSVPRLFISTRLGADEINPRVLQALGSEPIQYAVPVVKYDRKGYKPRSRQLLLTPNAVVIVEDAKVKQRIEYTNLTGISVSSLSDSLFVLHVQREDNKQKGDVVLQSDHVIETLTKTALSADRVNNININQGSITFAGGPGRDGIIDFTPGSELLITKAKNGHLAVVAPRLNSR.

Met1 carries the N-acetylmethionine modification. In terms of domain architecture, Myosin motor spans 47-731; sequence GVQDFVLLEN…TLFATEDALE (685 aa). ATP contacts are provided by residues Asn88, Tyr96, 139–148, and 192–196; these read SGESGAGKTE and NDNSS. Position 383 is an N6-methyllysine (Lys383). The residue at position 408 (Ser408) is a Phosphoserine. Lys486 bears the N6-acetyllysine mark. Ser536 carries the post-translational modification Phosphoserine. Residues 608 to 630 are actin-binding; that stretch reads LLELVEILKSKEPAYVRCIKPND. IQ domains follow at residues 734–757 and 758–786; these read RQSL…FLRV and KRSA…AAQT. Ser864 and Ser1041 each carry phosphoserine. In terms of domain architecture, TH1 spans 885–1059; sequence KDNYPQSVPR…NGHLAVVAPR (175 aa).

The protein belongs to the TRAFAC class myosin-kinesin ATPase superfamily. Myosin family. Interacts (via its IQ motifs) with CABP1 and CIB1; the interaction with CABP1 and CIB1 is calcium-dependent. Interacts (via tail domain) with PLEKHB1 (via PH domain); the interaction is not affected by the presence or absence of calcium and CALM. Interacts with POLR1A. Interacts with POLR2A. Component of the B-WICH complex, at least composed of SMARCA5/SNF2H, BAZ1B/WSTF, SF3B1, DEK, MYO1C, ERCC6, MYBBP1A and DDX21. Interacts (via its IQ motifs) with CALM; this precludes interaction with YWHAB. Interacts with YWHAB; this precludes interaction with CALM. Interacts with RPS6. Interacts with actin. Interacts with LLPH. Interacts with GLUT4. Interacts (via its IQ motifs) with SH3BGRL3; the interaction is dependent on calcium and takes place at membrane ruffles. In terms of processing, isoform 2 contains a N-acetylmethionine at position 1. In terms of tissue distribution, widely expressed.

The protein resides in the cytoplasm. Its subcellular location is the nucleus. The protein localises to the cell cortex. It is found in the cell projection. It localises to the ruffle membrane. The protein resides in the cytoplasmic vesicle. Its subcellular location is the stereocilium membrane. The protein localises to the nucleolus. It is found in the nucleoplasm. In terms of biological role, myosins are actin-based motor molecules with ATPase activity. Unconventional myosins serve in intracellular movements. Their highly divergent tails are presumed to bind to membranous compartments, which would be moved relative to actin filaments. Involved in glucose transporter recycling in response to insulin by regulating movement of intracellular GLUT4-containing vesicles to the plasma membrane. Component of the hair cell's (the sensory cells of the inner ear) adaptation-motor complex. Acts as a mediator of adaptation of mechanoelectrical transduction in stereocilia of vestibular hair cells. Binds phosphoinositides and links the actin cytoskeleton to cellular membranes. Isoform 3 is involved in regulation of transcription. Associated with transcriptional active ribosomal genes. Appears to cooperate with the WICH chromatin-remodeling complex to facilitate transcription. Necessary for the formation of the first phosphodiester bond during transcription initiation. This Bos taurus (Bovine) protein is Unconventional myosin-Ic (MYO1C).